The sequence spans 201 residues: Large ribosomal subunit protein bL25 (201 aa).

Belongs to the bacterial ribosomal protein bL25 family. CTC subfamily. Part of the 50S ribosomal subunit; part of the 5S rRNA/L5/L18/L25 subcomplex. Contacts the 5S rRNA. Binds to the 5S rRNA independently of L5 and L18.

This is one of the proteins that binds to the 5S RNA in the ribosome where it forms part of the central protuberance. This is Large ribosomal subunit protein bL25 from Thiobacillus denitrificans (strain ATCC 25259 / T1).